The chain runs to 250 residues: PF03932 family protein CutC (250 aa).

The protein belongs to the CutC family.

The protein localises to the cytoplasm. This is PF03932 family protein CutC from Vibrio vulnificus (strain YJ016).